The sequence spans 577 residues: Protein NRT1/ PTR FAMILY 6.2 (577 aa).

The next 12 helical transmembrane spans lie at 28 to 48 (WITAALILGIEVVERLSTMGI), 74 to 94 (FMGTSFLLCLLGGFLADSFLG), 96 to 116 (FKTIGIFSTIQALGTGALAVA), 134 to 154 (IPATAFQMTILYVSLYLIALG), 183 to 203 (FFFNRFFFFISMGTLLAVTVL), 214 to 234 (WAYGICTVSMAIAIVIFLCGT), 332 to 352 (LLPIWATTIIFWTTYAQMITF), 369 to 389 (IPAGSLTVFFVAAILITLAVY), 409 to 429 (LQRIAIGLVLSTAGMAAAALV), 447 to 467 (ISVFLLVPQFFLVGAGEAFIY), 488 to 508 (GLFLTTLSLGFFVSSFLVSIV), and 535 to 555 (WLLVILSGINFVVYIICALWF).

It belongs to the major facilitator superfamily. Proton-dependent oligopeptide transporter (POT/PTR) (TC 2.A.17) family. In terms of tissue distribution, expressed in shoots, leaves, flowers and siliques. Expressed in leaf petiole.

The protein resides in the membrane. Low-affinity proton-dependent nitrate transporter. Not involved in dipeptides transport. In Arabidopsis thaliana (Mouse-ear cress), this protein is Protein NRT1/ PTR FAMILY 6.2 (NPF6.2).